The following is a 112-amino-acid chain: Putative pterin-4-alpha-carbinolamine dehydratase (112 aa).

The protein belongs to the pterin-4-alpha-carbinolamine dehydratase family.

The catalysed reaction is (4aS,6R)-4a-hydroxy-L-erythro-5,6,7,8-tetrahydrobiopterin = (6R)-L-erythro-6,7-dihydrobiopterin + H2O. This Shewanella sp. (strain MR-7) protein is Putative pterin-4-alpha-carbinolamine dehydratase.